The following is a 351-amino-acid chain: Alanine racemase (351 aa).

Lys34 acts as the Proton acceptor; specific for D-alanine in catalysis. N6-(pyridoxal phosphate)lysine is present on Lys34. Position 126 (Arg126) interacts with substrate. Residue Tyr248 is the Proton acceptor; specific for L-alanine of the active site. Met296 provides a ligand contact to substrate.

The protein belongs to the alanine racemase family. Pyridoxal 5'-phosphate serves as cofactor.

It carries out the reaction L-alanine = D-alanine. The protein operates within amino-acid biosynthesis; D-alanine biosynthesis; D-alanine from L-alanine: step 1/1. Its function is as follows. Catalyzes the interconversion of L-alanine and D-alanine. May also act on other amino acids. The sequence is that of Alanine racemase (alr) from Deinococcus radiodurans (strain ATCC 13939 / DSM 20539 / JCM 16871 / CCUG 27074 / LMG 4051 / NBRC 15346 / NCIMB 9279 / VKM B-1422 / R1).